Here is a 931-residue protein sequence, read N- to C-terminus: Protocadherin gamma-A5 (931 aa).

The N-terminal stretch at 1 to 29 is a signal peptide; sequence MASPPRGWGCGELLLPFMLLGTLCEPGSG. Cadherin domains lie at 30–133, 134–242, 243–347, 348–452, 453–562, and 570–683; these read QIRY…FPRF, RDEE…APLF, TPSE…APEV, ILTS…PPNF, PQAS…TPEI, and DGST…TPID. At 30–692 the chain is on the extracellular side; that stretch reads QIRYSMPEEL…DPEDLDLTLY (663 aa). N-linked (GlcNAc...) asparagine glycans are attached at residues Asn419 and Asn545. A helical membrane pass occupies residues 693–713; the sequence is LVVAVAAVSCVFLAFVIVLLV. The Cytoplasmic portion of the chain corresponds to 714-931; sequence LRLRRWHKSR…KKKSGKKEKK (218 aa). 2 disordered regions span residues 800–840 and 901–931; these read NKEE…WPNN and ATLT…KEKK. Residues 809–840 show a composition bias toward polar residues; it reads APPNTDWRFSQAQRPGTSGSQNGDDTGTWPNN. Residues 921 to 931 are compositionally biased toward basic residues; it reads NKKKSGKKEKK.

It is found in the cell membrane. Functionally, potential calcium-dependent cell-adhesion protein. May be involved in the establishment and maintenance of specific neuronal connections in the brain. The protein is Protocadherin gamma-A5 (PCDHGA5) of Homo sapiens (Human).